We begin with the raw amino-acid sequence, 83 residues long: Exodeoxyribonuclease 7 small subunit (83 aa).

This sequence belongs to the XseB family. Heterooligomer composed of large and small subunits.

It is found in the cytoplasm. The catalysed reaction is Exonucleolytic cleavage in either 5'- to 3'- or 3'- to 5'-direction to yield nucleoside 5'-phosphates.. Its function is as follows. Bidirectionally degrades single-stranded DNA into large acid-insoluble oligonucleotides, which are then degraded further into small acid-soluble oligonucleotides. In Nitrobacter hamburgensis (strain DSM 10229 / NCIMB 13809 / X14), this protein is Exodeoxyribonuclease 7 small subunit.